The chain runs to 232 residues: Large ribosomal subunit protein uL1 (232 aa).

This sequence belongs to the universal ribosomal protein uL1 family. Part of the 50S ribosomal subunit.

Its function is as follows. Binds directly to 23S rRNA. The L1 stalk is quite mobile in the ribosome, and is involved in E site tRNA release. In terms of biological role, protein L1 is also a translational repressor protein, it controls the translation of the L11 operon by binding to its mRNA. This chain is Large ribosomal subunit protein uL1, found in Bacteroides thetaiotaomicron (strain ATCC 29148 / DSM 2079 / JCM 5827 / CCUG 10774 / NCTC 10582 / VPI-5482 / E50).